Consider the following 830-residue polypeptide: Leucine--tRNA ligase (830 aa).

The 'HIGH' region motif lies at 48–58 (PYPSGAIHMGH). A 'KMSKS' region motif is present at residues 596–600 (KMSKS). ATP is bound at residue Lys-599.

The protein belongs to the class-I aminoacyl-tRNA synthetase family.

Its subcellular location is the cytoplasm. The enzyme catalyses tRNA(Leu) + L-leucine + ATP = L-leucyl-tRNA(Leu) + AMP + diphosphate. The chain is Leucine--tRNA ligase from Helicobacter hepaticus (strain ATCC 51449 / 3B1).